The sequence spans 399 residues: Rho GTPase-activating protein gacC (399 aa).

A compositionally biased stretch (basic and acidic residues) spans 1–13; sequence MESKDQNVYRKGS. The tract at residues 1–80 is disordered; the sequence is MESKDQNVYR…SSSTSTTPVK (80 aa). Positions 14–31 are enriched in polar residues; sequence DNFSKGSNTFFGNLKSIS. The span at 61–79 shows a compositional bias: low complexity; it reads SVDSSSSNPSSSSTSTTPV. The Rho-GAP domain occupies 186–375; that stretch reads VELEESFKTA…NLISFFQQIF (190 aa).

The protein resides in the cytoplasm. Rho GTPase-activating protein involved in the signal transduction pathway. The polypeptide is Rho GTPase-activating protein gacC (gacC) (Dictyostelium discoideum (Social amoeba)).